Consider the following 1172-residue polypeptide: Putative cadmium/zinc-transporting ATPase HMA4 (1172 aa).

Residues 1 to 93 (MALQNKEEEK…VRVNGETSFK (93 aa)) are Cytoplasmic-facing. The 67-residue stretch at 17–83 (QKSYFDVLGI…ALNEARLEAN (67 aa)) folds into the HMA domain. The chain crosses the membrane as a helical span at residues 94-115 (NKWPSPFAVVSGLLLLLSFLKF). Topologically, residues 116–118 (VYS) are extracellular. Residues 119–138 (PLRWLAVAAVAAGIYPILAK) traverse the membrane as a helical segment. The Cytoplasmic segment spans residues 139–145 (AFASIKR). A helical membrane pass occupies residues 146–166 (PRIDINILVIITVIATLAMQD). Phe-167 is a topological domain (extracellular). The helical transmembrane segment at 168–188 (MEAAAVVFLFTISDWLETRAS) threads the bilayer. At 189-314 (YKATSVMQSL…KTKSQRLIDK (126 aa)) the chain is on the cytoplasmic side. Residues 315-337 (CSQYYTPAIILVSACVAIVPVIM) form a helical membrane-spanning segment. Topologically, residues 338-345 (KVHNLKHW) are extracellular. Residues 346 to 363 (FHLALVVLVSGCPCGLIL) form a helical membrane-spanning segment. The Cytoplasmic segment spans residues 364–656 (STPVATFCAL…KLARRARRKV (293 aa)). The active-site 4-aspartylphosphate intermediate is the Asp-401. Mg(2+) contacts are provided by Asp-601 and Asp-605. Residues 657-676 (VENVCLSIILKAGILALAFA) form a helical membrane-spanning segment. Over 677–680 (GHPL) the chain is Extracellular. Residues 681–700 (IWAAVLVDVGTCLLVIFNSM) form a helical membrane-spanning segment. The Cytoplasmic portion of the chain corresponds to 701 to 1172 (LLLREKKKIG…HHHHHHHVSA (472 aa)).

The protein belongs to the cation transport ATPase (P-type) (TC 3.A.3) family. Type IB subfamily.

The protein resides in the membrane. The enzyme catalyses Zn(2+)(in) + ATP + H2O = Zn(2+)(out) + ADP + phosphate + H(+). The catalysed reaction is Cd(2+)(in) + ATP + H2O = Cd(2+)(out) + ADP + phosphate + H(+). Its function is as follows. Involved in cadmium/zinc transport. This chain is Putative cadmium/zinc-transporting ATPase HMA4 (HMA4), found in Arabidopsis thaliana (Mouse-ear cress).